We begin with the raw amino-acid sequence, 356 residues long: Protein U8 (356 aa).

Belongs to the herpesviridae US22 family.

In Homo sapiens (Human), this protein is Protein U8 (U8).